The sequence spans 479 residues: MKIELVFIPSPAISHLMATVEMAEQLVDKNDNLSITVIIISFSSKNTSMITSLTSNNRLRYEIISGGDQQPTELKATDSHIQSLKPLVRDAVAKLVDSTLPDAPRLAGFVVDMYCTSMIDVANEFGVPSYLFYTSNAGFLGLLLHIQFMYDAEDIYDMSELEDSDVELVVPSLTSPYPLKCLPYIFKSKEWLTFFVTQARRFRETKGILVNTVPDLEPQALTFLSNGNIPRAYPVGPLLHLKNVNCDYVDKKQSEILRWLDEQPPRSVVFLCFGSMGGFSEEQVRETALALDRSGHRFLWSLRRASPNILREPPGEFTNLEEILPEGFFDRTANRGKVIGWAEQVAILAKPAIGGFVSHGGWNSTLESLWFGVPMAIWPLYAEQKFNAFEMVEELGLAVEIKKHWRGDLLLGRSEIVTAEEIEKGIICLMEQDSDVRKRVNEISEKCHVALMDGGSSETALKRFIQDVTENIAWSETES.

UDP-alpha-D-glucose-binding positions include S275, 342–344, 359–367, and 381–384; these read AEQ, HGGWNSTLE, and YAEQ.

It belongs to the UDP-glycosyltransferase family.

Its function is as follows. Glucosyltransferase that glucosylates the (+) enantiomer of abscisic acid ((+)-ABA). Is not active on structural analogs with alterations to the 8'- and 9'- methyl groups. The chain is UDP-glycosyltransferase 71B6 (UGT71B6) from Arabidopsis thaliana (Mouse-ear cress).